A 281-amino-acid polypeptide reads, in one-letter code: HTH-type transcriptional activator RamA (281 aa).

The region spanning 213–278 is the HTH luxR-type domain; the sequence is RIKQTTKLSA…EAVNAARRIG (66 aa).

RamA is a master regulator of acetate metabolism. It positively controls the expression of acnA, aceA, aceB, ack, pta and ramB genes in the presence of acetate. RamA is also a positive regulator of rpf2 gene expression during growth on glucose as the sole carbon source. In Corynebacterium glutamicum (strain ATCC 13032 / DSM 20300 / JCM 1318 / BCRC 11384 / CCUG 27702 / LMG 3730 / NBRC 12168 / NCIMB 10025 / NRRL B-2784 / 534), this protein is HTH-type transcriptional activator RamA.